The primary structure comprises 182 residues: Probable pyruvoyl-dependent arginine decarboxylase (182 aa).

The residue at position 43 (S43) is a Pyruvic acid (Ser).

Belongs to the PdaD family. It depends on pyruvate as a cofactor.

The catalysed reaction is L-arginine + H(+) = agmatine + CO2. The sequence is that of Probable pyruvoyl-dependent arginine decarboxylase from Chloroherpeton thalassium (strain ATCC 35110 / GB-78).